The primary structure comprises 732 residues: ATP-dependent RNA helicase DBP7 (732 aa).

Positions 1-91 (MIEDDGMLLN…QSNNESVKDV (91 aa)) are disordered. Composition is skewed to basic and acidic residues over residues 42 to 56 (MMME…KTFE) and 64 to 75 (DTNKKPKSDSSG). Over residues 76 to 86 (RKSYNQQSNNE) the composition is skewed to polar residues. The short motif at 144–173 (DNFDSLKIEQQLVNHLNEKMRIQKPTSIQK) is the Q motif element. Residues 178 to 372 (QLLSSKNNDL…NVALQNYKMI (195 aa)) enclose the Helicase ATP-binding domain. 191–198 (AQTGSGKT) lines the ATP pocket. The short motif at 307–310 (DEAD) is the DEAD box element. Residues 420–599 (QKKKKLDYVS…KLVNYTNDLL (180 aa)) form the Helicase C-terminal domain. The interval 692–711 (MGLQNTKNGGEAKKNSKESA) is disordered. Positions 701-711 (GEAKKNSKESA) are enriched in basic and acidic residues.

Belongs to the DEAD box helicase family. DDX31/DBP7 subfamily.

Its subcellular location is the nucleus. It localises to the nucleolus. It catalyses the reaction ATP + H2O = ADP + phosphate + H(+). Its function is as follows. ATP-binding RNA helicase involved in the biogenesis of 60S ribosomal subunits and is required for the normal formation of 25S and 5.8S rRNAs. The polypeptide is ATP-dependent RNA helicase DBP7 (DBP7) (Vanderwaltozyma polyspora (strain ATCC 22028 / DSM 70294 / BCRC 21397 / CBS 2163 / NBRC 10782 / NRRL Y-8283 / UCD 57-17) (Kluyveromyces polysporus)).